The sequence spans 445 residues: Methylenetetrahydrofolate--tRNA-(uracil-5-)-methyltransferase TrmFO (445 aa).

9 to 14 (GGGLAG) contacts FAD.

This sequence belongs to the MnmG family. TrmFO subfamily. FAD is required as a cofactor.

The protein resides in the cytoplasm. It catalyses the reaction uridine(54) in tRNA + (6R)-5,10-methylene-5,6,7,8-tetrahydrofolate + NADH + H(+) = 5-methyluridine(54) in tRNA + (6S)-5,6,7,8-tetrahydrofolate + NAD(+). The catalysed reaction is uridine(54) in tRNA + (6R)-5,10-methylene-5,6,7,8-tetrahydrofolate + NADPH + H(+) = 5-methyluridine(54) in tRNA + (6S)-5,6,7,8-tetrahydrofolate + NADP(+). In terms of biological role, catalyzes the folate-dependent formation of 5-methyl-uridine at position 54 (M-5-U54) in all tRNAs. This is Methylenetetrahydrofolate--tRNA-(uracil-5-)-methyltransferase TrmFO from Aquifex aeolicus (strain VF5).